The chain runs to 854 residues: Protein asteroid (854 aa).

The segment at 368–427 (SEEECSDDEHSSSSDEKFSDVEEGEDQEEADNQDEEQQEENQDVDSGDEEEEEADEGLEL) is disordered. A compositionally biased stretch (basic and acidic residues) spans 375-387 (DEHSSSSDEKFSD). The span at 388–427 (VEEGEDQEEADNQDEEQQEENQDVDSGDEEEEEADEGLEL) shows a compositional bias: acidic residues.

It belongs to the asteroid family. In terms of tissue distribution, expressed in the proliferative tissues of embryos and in the mitotically active tissue anterior to the morphogenetic furrow in eye imaginal disks.

In terms of biological role, may function in EGF receptor signaling. May play a role in compound eye morphogenesis. The polypeptide is Protein asteroid (ast) (Drosophila melanogaster (Fruit fly)).